The primary structure comprises 278 residues: Urease accessory protein UreD (278 aa).

The protein belongs to the UreD family. UreD, UreF and UreG form a complex that acts as a GTP-hydrolysis-dependent molecular chaperone, activating the urease apoprotein by helping to assemble the nickel containing metallocenter of UreC. The UreE protein probably delivers the nickel.

The protein localises to the cytoplasm. Required for maturation of urease via the functional incorporation of the urease nickel metallocenter. This is Urease accessory protein UreD from Staphylococcus aureus (strain JH1).